The chain runs to 187 residues: Phosphatidylethanolamine-binding protein 1 (187 aa).

2 positions are modified to phosphoserine: serine 6 and serine 13. The residue at position 42 (threonine 42) is a Phosphothreonine. Phosphoserine occurs at positions 52 and 98. The tract at residues 93-134 (KGGNISSGTVLSDYVGSGPPKGTGLHRYVWLVYEQDGPLKCD) is interaction with RAF1.

The protein belongs to the phosphatidylethanolamine-binding protein family. As to quaternary structure, has a tendency to form dimers by disulfide cross-linking. Interacts with RAF1 and this interaction is enhanced if RAF1 is phosphorylated on residues 'Ser-338', 'Ser-339', 'Tyr-340' and 'Tyr-341'. Interacts with ALOX15; in response to IL13/interleukin-13, prevents the interaction of PEBP1 with RAF1 to activate the ERK signaling cascade.

Its subcellular location is the cytoplasm. Its function is as follows. Binds ATP, opioids and phosphatidylethanolamine. Has lower affinity for phosphatidylinositol and phosphatidylcholine. Serine protease inhibitor which inhibits thrombin, neuropsin and chymotrypsin but not trypsin, tissue type plasminogen activator and elastase. Inhibits the kinase activity of RAF1 by inhibiting its activation and by dissociating the RAF1/MEK complex and acting as a competitive inhibitor of MEK phosphorylation. In terms of biological role, HCNP may be involved in the function of the presynaptic cholinergic neurons of the central nervous system. HCNP increases the production of choline acetyltransferase but not acetylcholinesterase. Seems to be mediated by a specific receptor. In Oryctolagus cuniculus (Rabbit), this protein is Phosphatidylethanolamine-binding protein 1 (PEBP1).